Reading from the N-terminus, the 415-residue chain is Dihydroorotase (415 aa).

2 residues coordinate Zn(2+): His-54 and His-56. Substrate contacts are provided by residues 56 to 58 (HFR) and Asn-88. 4 residues coordinate Zn(2+): Lys-136, His-169, His-217, and Asp-278. An N6-carboxylysine modification is found at Lys-136. Residue Asp-278 is part of the active site. His-282 provides a ligand contact to substrate.

This sequence belongs to the metallo-dependent hydrolases superfamily. DHOase family. Class I DHOase subfamily. Zn(2+) is required as a cofactor.

The enzyme catalyses (S)-dihydroorotate + H2O = N-carbamoyl-L-aspartate + H(+). Its pathway is pyrimidine metabolism; UMP biosynthesis via de novo pathway; (S)-dihydroorotate from bicarbonate: step 3/3. Functionally, catalyzes the reversible cyclization of carbamoyl aspartate to dihydroorotate. In Thermoplasma volcanium (strain ATCC 51530 / DSM 4299 / JCM 9571 / NBRC 15438 / GSS1), this protein is Dihydroorotase.